Reading from the N-terminus, the 350-residue chain is Protein RecA (350 aa).

ATP is bound at residue 65 to 72 (GPESSGKT).

Belongs to the RecA family.

Its subcellular location is the cytoplasm. Can catalyze the hydrolysis of ATP in the presence of single-stranded DNA, the ATP-dependent uptake of single-stranded DNA by duplex DNA, and the ATP-dependent hybridization of homologous single-stranded DNAs. It interacts with LexA causing its activation and leading to its autocatalytic cleavage. The sequence is that of Protein RecA from Nautilia profundicola (strain ATCC BAA-1463 / DSM 18972 / AmH).